The sequence spans 436 residues: Histidine--tRNA ligase (436 aa).

The protein belongs to the class-II aminoacyl-tRNA synthetase family.

It is found in the cytoplasm. It carries out the reaction tRNA(His) + L-histidine + ATP = L-histidyl-tRNA(His) + AMP + diphosphate + H(+). This Thermococcus kodakarensis (strain ATCC BAA-918 / JCM 12380 / KOD1) (Pyrococcus kodakaraensis (strain KOD1)) protein is Histidine--tRNA ligase.